Here is a 526-residue protein sequence, read N- to C-terminus: Efflux pump aunC (526 aa).

Helical transmembrane passes span 23–43 (LCYKLVLVTVGLCFCIFCTSL), 64–84 (DVGWYASAYLLTTCAVTLPFG), 89–109 (FFPIKWVYLSALFVFELGSFI), 125–145 (VAGLGGGGLFSGSLLIITQCV), 155–175 (GFIMSIFAVASVIAPLMGGAF), 183–203 (WCFYINLPFGLVSAVVIFFTF), 218–238 (AAGLDPLGTATFLPAIVCLLL), 254–274 (IIALFTLFGVLLACFVGLQLW), 296–316 (LYGFCLNGAMFTFVYYLPIWF), 339–359 (VIFAIISGVLVSATGYFGPFM), 360–380 (LLSAAMASIAAGLLSMLHPSS), 386–406 (IGYQVLLGSSIGMGFQLPVFV), 418–438 (TATALMTFIQLLGGAIFVSVA), and 491–511 (VHTFYLAIGLAAASFLAATVI).

It belongs to the major facilitator superfamily. TCR/Tet family.

It is found in the cell membrane. Functionally, efflux pump; part of the gene cluster that mediates the biosynthesis of aurasperone B, a dimeric gamma-naphthopyrone. The sequence is that of Efflux pump aunC from Aspergillus niger (strain ATCC 1015 / CBS 113.46 / FGSC A1144 / LSHB Ac4 / NCTC 3858a / NRRL 328 / USDA 3528.7).